We begin with the raw amino-acid sequence, 550 residues long: Methionine--tRNA ligase (550 aa).

Positions 13–23 match the 'HIGH' region motif; the sequence is PYANGPLHFGH. Zn(2+) is bound by residues C145, C148, C158, and C161. The 'KMSKS' region motif lies at 331 to 335; that stretch reads QFSKS. ATP is bound at residue K334.

It belongs to the class-I aminoacyl-tRNA synthetase family. MetG type 1 subfamily. Monomer. Requires Zn(2+) as cofactor.

It localises to the cytoplasm. It catalyses the reaction tRNA(Met) + L-methionine + ATP = L-methionyl-tRNA(Met) + AMP + diphosphate. Its function is as follows. Is required not only for elongation of protein synthesis but also for the initiation of all mRNA translation through initiator tRNA(fMet) aminoacylation. The sequence is that of Methionine--tRNA ligase from Chlamydia trachomatis serovar A (strain ATCC VR-571B / DSM 19440 / HAR-13).